The sequence spans 354 residues: G-protein coupled receptor homolog US28 (354 aa).

At 1–37 (MTPTTTTAELTTEFDYDEDATPCVFTDVLNQSKPVTL) the chain is on the extracellular side. N-linked (GlcNAc...) asparagine; by host glycosylation occurs at asparagine 30. A helical membrane pass occupies residues 38–58 (FLYGVVFLFGSIGNFLVIFTI). Residues 59–69 (TWRRRIQCSGD) lie on the Cytoplasmic side of the membrane. A helical transmembrane segment spans residues 70–90 (VYFINLAAADLLFVCTLPLWM). Topologically, residues 91–101 (QYLLDHNSLAS) are extracellular. A helical transmembrane segment spans residues 102 to 122 (VPCTLLTACFYVAMFASLCFI). The Cytoplasmic portion of the chain corresponds to 123 to 145 (TEIALDRYYAIVYMRYRPVKQAC). The chain crosses the membrane as a helical span at residues 146-166 (LFSIFWWIFAVIIAIPHFMVV). Topologically, residues 167 to 183 (TKKDNQCMTDYDYLEVS) are extracellular. The helical transmembrane segment at 184 to 204 (YPIILNVELMLGAFVIPLSVI) threads the bilayer. Over 205-228 (SYCYYRISRIVAVSQSRHKGRIVR) the chain is Cytoplasmic. The helical transmembrane segment at 229–249 (VLIAVVLVFIIFWLPYHLTLF) threads the bilayer. At 250–273 (VDTLKLLKWISSSCEFERSLKRAL) the chain is on the extracellular side. The chain crosses the membrane as a helical span at residues 274–294 (ILTESLAFCHCCLNPLLYVFV). Residues 295–354 (GTKFRQELHCLLAEFRQRLFSRDVSWYHSMSFSRRSSPSRRETSSDTLSDEVCRVSQIIP) are Cytoplasmic-facing.

Belongs to the G-protein coupled receptor 1 family. In terms of assembly, interacts with host GPRASP1; this interaction targets US28 to lysosomes for degradation. Interacts with host CX3CL1/Fractalkine (via N-terminus). Interacts with host Gi alpha-1 subunit GNAI1; this interaction does not lead to the catalytic activation of Gi complex. Phosphorylated. High phosphorylation occurs concomitantly with receptor endocytosis and correlate with low receptor presence at the plasma membrane.

Its subcellular location is the host cell membrane. Its function is as follows. Binds to a great number of different CC-chemokines including CCL5/RANTES, CCL2/MCP-1, CCL3/MIP-1-alpha as well as CX3CL1/Fractalkine. Transduces signals resulting in the activation of MAP kinase signaling pathways and augmentation of intracellular calcium ion levels, leading to alterations in chemotactic behavior of vascular smooth muscle cells and macrophages. The US28 receptor also exhibits high levels of agonist-independent signaling activity and agonist-independent endocytosis. Interacts with the host Gi complex without activating it, thereby probably interfering with the chemokine-Gi signaling. May also function as a G protein sink to sequester G protein from the cell surface via internalization. Interacts with endogenous Gaq/11 subunits and thereby constitutively activates phospholipase C. The chain is G-protein coupled receptor homolog US28 (US28) from Homo sapiens (Human).